The sequence spans 173 residues: Ribosome maturation factor RimM (173 aa).

Residues 95–173 (EGEYYWRQLE…LMVVDWDPDF (79 aa)) form the PRC barrel domain.

The protein belongs to the RimM family. As to quaternary structure, binds ribosomal protein uS19.

Its subcellular location is the cytoplasm. Functionally, an accessory protein needed during the final step in the assembly of 30S ribosomal subunit, possibly for assembly of the head region. Essential for efficient processing of 16S rRNA. May be needed both before and after RbfA during the maturation of 16S rRNA. It has affinity for free ribosomal 30S subunits but not for 70S ribosomes. The protein is Ribosome maturation factor RimM of Hahella chejuensis (strain KCTC 2396).